Here is a 349-residue protein sequence, read N- to C-terminus: MSTLELHHIGKSYQSVMVLDRIDLHVPPGSRTAIVGPSGSGKTTLLRIIAGFETPDAGKVILQGKAMFDGTTYVPAHKRGIGFVPQDGALFPHFTVAGNIGYGLKGSQRDKERRINELMDMVALDRRLSALWPHEISGGQQQRVALARALAQRPVLMLLDEPFSALDTALRASTRKAVAELLSEANIASILVTHDQTEALSFADQVAVMRAGKLAHVGPPQELYLRPVDEPTATFLGETLMLTAQLGTGLAHCALGQVKVDNPHRRGEARIMLRPEQITLTPLRPEQYNAASCLAKVIAIDFAGFISTLTLQIISSGETIEIKTISREDLHVGLTVGLDIMGQAHIFAE.

The ABC transporter domain occupies 4–236 (LELHHIGKSY…PVDEPTATFL (233 aa)). 36–43 (GPSGSGKT) contacts ATP.

This sequence belongs to the ABC transporter superfamily. Fe(3+) ion importer (TC 3.A.1.10) family. As to quaternary structure, the complex is composed of two ATP-binding proteins (FbpC), two transmembrane proteins (FbpB) and a solute-binding protein (FbpA).

The protein resides in the cell inner membrane. The catalysed reaction is Fe(3+)(out) + ATP + H2O = Fe(3+)(in) + ADP + phosphate + H(+). Part of the ABC transporter complex FbpABC involved in Fe(3+) ions import. Responsible for energy coupling to the transport system. The protein is Fe(3+) ions import ATP-binding protein FbpC of Yersinia pestis bv. Antiqua (strain Antiqua).